Here is a 403-residue protein sequence, read N- to C-terminus: Poly(rC)-binding protein 4 (403 aa).

3 consecutive KH domains span residues threonine 17 to glycine 67, proline 101 to glycine 154, and threonine 241 to glycine 293.

The protein resides in the cytoplasm. Functionally, single-stranded nucleic acid binding protein that binds preferentially to oligo dC. This chain is Poly(rC)-binding protein 4 (PCBP4), found in Homo sapiens (Human).